The chain runs to 152 residues: Fibroblast growth factor 1 (152 aa).

The residue at position 2 (Ala-2) is an N-acetylalanine. Positions 2–15 (AEGEITTFTALTEK) are excised as a propeptide. A heparin-binding site is contributed by Asn-33. A heparin-binding region spans residues 127-143 (KKNGSCKRGPRTHYGQK).

This sequence belongs to the heparin-binding growth factors family. Monomer. Homodimer. Interacts with FGFR1, FGFR2, FGFR3 and FGFR4. Affinity between fibroblast growth factors (FGFs) and their receptors is increased by heparan sulfate glycosaminoglycans that function as coreceptors. Found in a complex with FGFBP1, FGF1 and FGF2. Interacts with FGFBP1. Part of a Cu(2+)-dependent multiprotein aggregate containing FGF1, S100A13 and SYT1. Interacts with SYT1. Interacts with S100A13. Interacts with LRRC59. Interacts with CSNKA, CSNKB and FIBP. While binding with LRRC59, CSNKA and FIBP seem mutually exclusive, CSNKB and FIBP may cooperatively interact with FGF1. Forms a ternary complex with FGFR1 and ITGAV:ITGB3 and induces the recruitment of PTPN11 to the complex. In terms of processing, in the nucleus, phosphorylated by PKC/PRKCD.

The protein localises to the secreted. It localises to the cytoplasm. Its subcellular location is the cell cortex. The protein resides in the cytosol. It is found in the nucleus. Its function is as follows. Plays an important role in the regulation of cell survival, cell division, angiogenesis, cell differentiation and cell migration. Functions as a potent mitogen in vitro. Acts as a ligand for FGFR1 and integrins. Binds to FGFR1 in the presence of heparin leading to FGFR1 dimerization and activation via sequential autophosphorylation on tyrosine residues which act as docking sites for interacting proteins, leading to the activation of several signaling cascades. Binds to integrin ITGAV:ITGB3. Its binding to integrin, subsequent ternary complex formation with integrin and FGFR1, and the recruitment of PTPN11 to the complex are essential for FGF1 signaling. Induces the phosphorylation and activation of FGFR1, FRS2, MAPK3/ERK1, MAPK1/ERK2 and AKT1. Can induce angiogenesis. The polypeptide is Fibroblast growth factor 1 (FGF1) (Sus scrofa (Pig)).